Consider the following 520-residue polypeptide: Transactivator/viroplasmin protein (520 aa).

Disordered regions lie at residues 32–51 (GSSQ…KEEA) and 487–520 (QDAS…KQVD). Over residues 40-51 (SLHRETPEKEEA) the composition is skewed to basic and acidic residues.

It belongs to the caulimoviridae viroplasmin family.

The protein localises to the host cytoplasm. Enhances the ribosomal termination-reinitiation event leading to the translation of major open reading frames on the polycistronic viral RNAs. This Arabidopsis thaliana (Mouse-ear cress) protein is Transactivator/viroplasmin protein.